Reading from the N-terminus, the 660-residue chain is Cysteine-rich receptor-like protein kinase 22 (660 aa).

Positions 1-24 are cleaved as a signal peptide; sequence MKQRSFLSILCFILLAFGVASVSA. 2 Gnk2-homologous domains span residues 25–128 and 137–250; these read QTCI…NISF and IEPQ…LFTF. The Extracellular portion of the chain corresponds to 25-294; the sequence is QTCIENRKYF…DSRGVSAGIV (270 aa). Residues Asn-37, Asn-53, Asn-105, Asn-125, Asn-191, Asn-230, and Asn-256 are each glycosylated (N-linked (GlcNAc...) asparagine). Pro residues predominate over residues 264–273; sequence KPPMNVPRPP. Positions 264–283 are disordered; sequence KPPMNVPRPPSVGHGANTTD. N-linked (GlcNAc...) asparagine glycans are attached at residues Asn-280 and Asn-284. Residues 295-315 form a helical membrane-spanning segment; the sequence is VVITVPAVVIVLILVVLGFFI. At 316-660 the chain is on the cytoplasmic side; sequence CWRRKSLQRT…DPLSEGLESG (345 aa). Residues 353–632 form the Protein kinase domain; that stretch reads FSKSNKLGEG…IVSMLTSNTI (280 aa). Residues 359–367 and Lys-381 each bind ATP; that span reads LGEGRFGEV. Tyr-426 bears the Phosphotyrosine mark. Asp-478 acts as the Proton acceptor in catalysis. Ser-482 carries the post-translational modification Phosphoserine. Position 518 is a phosphothreonine (Thr-518). At Tyr-526 the chain carries Phosphotyrosine.

Belongs to the protein kinase superfamily. Ser/Thr protein kinase family. CRK subfamily.

The protein localises to the membrane. It catalyses the reaction L-seryl-[protein] + ATP = O-phospho-L-seryl-[protein] + ADP + H(+). It carries out the reaction L-threonyl-[protein] + ATP = O-phospho-L-threonyl-[protein] + ADP + H(+). In Arabidopsis thaliana (Mouse-ear cress), this protein is Cysteine-rich receptor-like protein kinase 22 (CRK22).